The primary structure comprises 131 residues: Profilin-3 (131 aa).

It belongs to the profilin family. As to quaternary structure, occurs in many kinds of cells as a complex with monomeric actin in a 1:1 ratio.

Its subcellular location is the cytoplasm. The protein localises to the cytoskeleton. Its function is as follows. Binds to actin and affects the structure of the cytoskeleton. At high concentrations, profilin prevents the polymerization of actin, whereas it enhances it at low concentrations. By binding to PIP2, it inhibits the formation of IP3 and DG. In Hevea brasiliensis (Para rubber tree), this protein is Profilin-3.